A 410-amino-acid chain; its full sequence is Cytosolic isocitrate dehydrogenase [NADP] (410 aa).

NADP(+)-binding positions include 77-79 and Arg84; that span reads TIT. Thr79 lines the substrate pocket. Residues 96–102, Arg111, and Arg134 each bind substrate; that span reads SPNGTIR. Lys260 provides a ligand contact to NADP(+). Mn(2+)-binding residues include Asp275 and Asp279. Residues 310 to 315 and Asn328 each bind NADP(+); that span reads GTVTRH.

Belongs to the isocitrate and isopropylmalate dehydrogenases family. It depends on Mg(2+) as a cofactor. Mn(2+) is required as a cofactor.

The protein localises to the cytoplasm. The protein resides in the cytosol. The catalysed reaction is D-threo-isocitrate + NADP(+) = 2-oxoglutarate + CO2 + NADPH. Its function is as follows. May supply 2-oxoglutarate for amino acid biosynthesis and ammonia assimilation via the glutamine synthetase/glutamate synthase (GS/GOGAT) pathway. May be involved in the production of NADPH to promote redox signaling or homeostasis in response to oxidative stress, or redox signaling linked to defense responses. The sequence is that of Cytosolic isocitrate dehydrogenase [NADP] from Arabidopsis thaliana (Mouse-ear cress).